The sequence spans 266 residues: Cytochrome c oxidase assembly factor 7 homolog (266 aa).

Sel1-like repeat units follow at residues 32 to 64 and 66 to 104; these read PEAC…DDYG and AKSC…NLND. Positions 166–179 are enriched in low complexity; the sequence is AVTASSGSGTSSPP. The segment at 166 to 187 is disordered; the sequence is AVTASSGSGTSSPPAGQPPLKD. Residues 212-247 form a Sel1-like 3 repeat; the sequence is MYACANLSQMYARGDGIEKNEKEAEKYKKLALEMQD.

This sequence belongs to the hcp beta-lactamase family.

Required for locomotion. Probably involved in the regulation of formation/maintenance of motor neurons at presynaptic terminals at the neuromuscular junction. The sequence is that of Cytochrome c oxidase assembly factor 7 homolog from Drosophila melanogaster (Fruit fly).